A 445-amino-acid polypeptide reads, in one-letter code: DDB1- and CUL4-associated factor 13 (445 aa).

Lysine 49 is modified (N6-acetyllysine). WD repeat units follow at residues 64–104 (GHRD…CIRT), 107–146 (AHEGFVRGICTRFCGTSFFTVGDDKTVKQWKMDGPGYGDE), 149–191 (PLHT…PICS), 194–234 (WGFD…PLKK), 236–276 (ILDM…TPVM), 280–319 (DHVSAVLDVDYSPTGKEFVSASFDKSIRIFPVDKSRSREV), and 323–362 (KRMQHVICVKWTSDSKYIMCGSDEMNIRLWKANASEKLGV). A required for nucleolar location region spans residues 353–441 (KANASEKLGV…LVSEKKKHVV (89 aa)).

This sequence belongs to the WD repeat DCAF13/WDSOF1 family. Part of the small subunit (SSU) processome, composed of more than 70 proteins and the RNA chaperone small nucleolar RNA (snoRNA) U3. Component of the DCX(DCAF13) E3 ubiquitin ligase complex, at least composed of CUL4 (CUL4A or CUL4B), DDB1, DCAF13 and RBX1. Interacts (via WD40 domain) with DDB1. Interacts with ESR1 and LATS1. As to expression, expressed in the endometrium during decidualization. Expression is down-regulated in preeclampsia decidual tissues.

It localises to the nucleus. The protein localises to the nucleolus. The protein operates within protein modification; protein ubiquitination. In terms of biological role, part of the small subunit (SSU) processome, first precursor of the small eukaryotic ribosomal subunit. During the assembly of the SSU processome in the nucleolus, many ribosome biogenesis factors, an RNA chaperone and ribosomal proteins associate with the nascent pre-rRNA and work in concert to generate RNA folding, modifications, rearrangements and cleavage as well as targeted degradation of pre-ribosomal RNA by the RNA exosome. Participates in the 18S rRNA processing in growing oocytes, being essential for oocyte nonsurrounded nucleolus (NSN) to surrounded nucleolus (SN) transition. Its function is as follows. Substrate-recognition component of a DCX (DDB1-CUL4-X-box) E3 ubiquitin-protein ligase complex that plays a key role in embryo preimplantation and is required for normal meiotic cycle progression in oocytes. Acts as a maternal factor that regulates oocyte and zygotic chromatin tightness during maternal to zygotic transition. Also involved in the transformation of the endometrium into the decidua, known as decidualization, providing a solid foundation for implantation of blastocysts. Recognizes the histone methyltransferases SUV39H1 and SUV39H2 and directs them to polyubiquitination and proteasomal degradation, which facilitates the H3K9me3 removal and early zygotic gene expression, essential steps for progressive genome reprogramming and the establishment of pluripotency during preimplantation embryonic development. Supports the spindle assembly and chromosome condensation during oocyte meiotic division by targeting the polyubiquitination and degradation of PTEN, a lipid phosphatase that inhibits PI3K pathway as well as oocyte growth and maturation. Targets PMP22 for polyubiquitination and proteasomal degradation. The chain is DDB1- and CUL4-associated factor 13 from Homo sapiens (Human).